We begin with the raw amino-acid sequence, 149 residues long: Vesicle-associated protein 3-1 (149 aa).

An N-acetylmethionine modification is found at methionine 1. Position 2 is an N-acetylserine; in Vesicle-associated protein 3-1, N-terminally processed (serine 2). The MSP domain occupies 6–126 (LLEIEPMYLQ…EETKLRVTYV (121 aa)).

This sequence belongs to the VAMP-associated protein (VAP) (TC 9.B.17) family.

May play a role in vesicle trafficking. The sequence is that of Vesicle-associated protein 3-1 (PVA31) from Arabidopsis thaliana (Mouse-ear cress).